The following is a 172-amino-acid chain: 3-hydroxydecanoyl-[acyl-carrier-protein] dehydratase (172 aa).

His71 is an active-site residue.

This sequence belongs to the thioester dehydratase family. FabA subfamily. Homodimer.

It localises to the cytoplasm. The enzyme catalyses a (3R)-hydroxyacyl-[ACP] = a (2E)-enoyl-[ACP] + H2O. The catalysed reaction is (3R)-hydroxydecanoyl-[ACP] = (2E)-decenoyl-[ACP] + H2O. It catalyses the reaction (2E)-decenoyl-[ACP] = (3Z)-decenoyl-[ACP]. It participates in lipid metabolism; fatty acid biosynthesis. Necessary for the introduction of cis unsaturation into fatty acids. Catalyzes the dehydration of (3R)-3-hydroxydecanoyl-ACP to E-(2)-decenoyl-ACP and then its isomerization to Z-(3)-decenoyl-ACP. Can catalyze the dehydratase reaction for beta-hydroxyacyl-ACPs with saturated chain lengths up to 16:0, being most active on intermediate chain length. This Escherichia fergusonii (strain ATCC 35469 / DSM 13698 / CCUG 18766 / IAM 14443 / JCM 21226 / LMG 7866 / NBRC 102419 / NCTC 12128 / CDC 0568-73) protein is 3-hydroxydecanoyl-[acyl-carrier-protein] dehydratase.